Reading from the N-terminus, the 60-residue chain is UPF0434 protein Rfer_3156 (60 aa).

This sequence belongs to the UPF0434 family.

The polypeptide is UPF0434 protein Rfer_3156 (Albidiferax ferrireducens (strain ATCC BAA-621 / DSM 15236 / T118) (Rhodoferax ferrireducens)).